Consider the following 617-residue polypeptide: 1-deoxy-D-xylulose-5-phosphate synthase (617 aa).

Thiamine diphosphate contacts are provided by residues His77 and Gly118 to Ser120. Asp149 contributes to the Mg(2+) binding site. Thiamine diphosphate contacts are provided by residues Gly150 to Ala151, Asn178, Tyr286, and Glu367. Mg(2+) is bound at residue Asn178.

Belongs to the transketolase family. DXPS subfamily. In terms of assembly, homodimer. The cofactor is Mg(2+). Requires thiamine diphosphate as cofactor.

It catalyses the reaction D-glyceraldehyde 3-phosphate + pyruvate + H(+) = 1-deoxy-D-xylulose 5-phosphate + CO2. The protein operates within metabolic intermediate biosynthesis; 1-deoxy-D-xylulose 5-phosphate biosynthesis; 1-deoxy-D-xylulose 5-phosphate from D-glyceraldehyde 3-phosphate and pyruvate: step 1/1. Its function is as follows. Catalyzes the acyloin condensation reaction between C atoms 2 and 3 of pyruvate and glyceraldehyde 3-phosphate to yield 1-deoxy-D-xylulose-5-phosphate (DXP). This is 1-deoxy-D-xylulose-5-phosphate synthase from Actinobacillus pleuropneumoniae serotype 5b (strain L20).